Consider the following 358-residue polypeptide: MSTSTATAQNLSFVLEGIHQVKFEDRPIPELKDPHDVLVNVKFTGICGSDVHYWEHGSIGQFVVKDPMVLGHESSGVISKVGSAVTGLKVGDRVAMEPGIPCRRCEPCKAGKYNLCEKMAFAATPPYDGTLAKFYVLPEDFCYKLPDNISLQEGALMEPLGVAVHIVRQASVTPGQSVIVFGAGPVGLLCCAVAKAFGAAKIIAVDIQKPRLDFAKRYAATSTFEPAKVSAVDNADRLRKENNLGVGADVVIDASGAEPSVHTGIHVLRPGGTYVQGGMGRSEIMFPIMAACTKELTFKGSFRYGSGDYKLAVGLVASGRVNVKDLITGVVEFHDAEQAFKEVKAGKGIKTLIAGIQD.

Zn(2+) is bound by residues Cys47, His72, and Glu73. Position 182-187 (182-187 (GAGPVG)) interacts with NAD(+).

It belongs to the zinc-containing alcohol dehydrogenase family. Zn(2+) serves as cofactor.

It catalyses the reaction xylitol + NAD(+) = D-xylulose + NADH + H(+). The protein operates within carbohydrate degradation; L-arabinose degradation via L-arabinitol; D-xylulose 5-phosphate from L-arabinose (fungal route): step 4/5. Xylitol dehydrogenase which catalyzes the conversion of xylitol to D-xylulose. Xylose is a major component of hemicelluloses such as xylan. Most fungi utilize D-xylose via three enzymatic reactions, xylose reductase (XR), xylitol dehydrogenase (XDH), and xylulokinase, to form xylulose 5-phosphate, which enters pentose phosphate pathway. The chain is Probable D-xylulose reductase A (xdhA) from Neosartorya fischeri (strain ATCC 1020 / DSM 3700 / CBS 544.65 / FGSC A1164 / JCM 1740 / NRRL 181 / WB 181) (Aspergillus fischerianus).